Reading from the N-terminus, the 1017-residue chain is Protein translocase subunit SecA 1 (1017 aa).

Residues glutamine 143, 161-165, and aspartate 661 each bind ATP; that span reads GEGKT. The tract at residues 978–999 is disordered; the sequence is GLNDDDEPLPAQPITTEQKPGR. Zn(2+) is bound by residues cysteine 1003, cysteine 1005, cysteine 1014, and cysteine 1015.

Belongs to the SecA family. In terms of assembly, monomer and homodimer. Part of the essential Sec protein translocation apparatus which comprises SecA, SecYEG and auxiliary proteins SecDF. Other proteins may also be involved. Requires Zn(2+) as cofactor.

It is found in the cell inner membrane. The protein resides in the cytoplasm. The catalysed reaction is ATP + H2O + cellular proteinSide 1 = ADP + phosphate + cellular proteinSide 2.. In terms of biological role, part of the Sec protein translocase complex. Interacts with the SecYEG preprotein conducting channel. Has a central role in coupling the hydrolysis of ATP to the transfer of proteins into and across the cell membrane, serving as an ATP-driven molecular motor driving the stepwise translocation of polypeptide chains across the membrane. The protein is Protein translocase subunit SecA 1 of Chlorobium chlorochromatii (strain CaD3).